A 566-amino-acid polypeptide reads, in one-letter code: UvrABC system protein C (566 aa).

Residues 16–93 (EKPGVYLFKK…IQQYKPRYNV (78 aa)) form the GIY-YIG domain. In terms of domain architecture, UVR spans 199 to 234 (AEVLPKLYEKIEEFSKELMFEKCAHIRDQIIALENL).

It belongs to the UvrC family. In terms of assembly, interacts with UvrB in an incision complex.

It localises to the cytoplasm. In terms of biological role, the UvrABC repair system catalyzes the recognition and processing of DNA lesions. UvrC both incises the 5' and 3' sides of the lesion. The N-terminal half is responsible for the 3' incision and the C-terminal half is responsible for the 5' incision. This chain is UvrABC system protein C, found in Aquifex aeolicus (strain VF5).